The following is a 444-amino-acid chain: Phosphoglucosamine mutase (444 aa).

S102 acts as the Phosphoserine intermediate in catalysis. Mg(2+)-binding residues include S102, D241, D243, and D245. Phosphoserine is present on S102.

This sequence belongs to the phosphohexose mutase family. Mg(2+) is required as a cofactor. Post-translationally, activated by phosphorylation.

It carries out the reaction alpha-D-glucosamine 1-phosphate = D-glucosamine 6-phosphate. Its function is as follows. Catalyzes the conversion of glucosamine-6-phosphate to glucosamine-1-phosphate. This chain is Phosphoglucosamine mutase, found in Histophilus somni (strain 2336) (Haemophilus somnus).